Consider the following 267-residue polypeptide: Glutamate racemase (267 aa).

Residues 13 to 14 and 45 to 46 each bind substrate; these read DS and YG. Cys77 acts as the Proton donor/acceptor in catalysis. 78–79 provides a ligand contact to substrate; the sequence is NT. Cys192 serves as the catalytic Proton donor/acceptor. Residue 193–194 participates in substrate binding; that stretch reads TH.

This sequence belongs to the aspartate/glutamate racemases family.

It catalyses the reaction L-glutamate = D-glutamate. It participates in cell wall biogenesis; peptidoglycan biosynthesis. Provides the (R)-glutamate required for cell wall biosynthesis. The sequence is that of Glutamate racemase from Sinorhizobium fredii (strain NBRC 101917 / NGR234).